We begin with the raw amino-acid sequence, 248 residues long: Proteasome subunit alpha type-7 (248 aa).

A glycan (O-linked (GlcNAc) serine) is linked at S130. Y153 is modified (phosphotyrosine).

It belongs to the peptidase T1A family. In terms of assembly, the 26S proteasome consists of a 20S proteasome core and two 19S regulatory subunits. The 20S proteasome core is a barrel-shaped complex made of 28 subunits that are arranged in four stacked rings. The two outer rings are each formed by seven alpha subunits, and the two inner rings are formed by seven beta subunits. The proteolytic activity is exerted by three beta-subunits PSMB5, PSMB6 and PSMB7. PSMA7 interacts directly with the PSMG1-PSMG2 heterodimer which promotes 20S proteasome assembly. Interacts with HIF1A. Interacts with RAB7A. Interacts with PRKN. Interacts with ABL1 and ABL2. Interacts with EMAP2. Interacts with MAVS.

It is found in the cytoplasm. It localises to the nucleus. Functionally, component of the 20S core proteasome complex involved in the proteolytic degradation of most intracellular proteins. This complex plays numerous essential roles within the cell by associating with different regulatory particles. Associated with two 19S regulatory particles, forms the 26S proteasome and thus participates in the ATP-dependent degradation of ubiquitinated proteins. The 26S proteasome plays a key role in the maintenance of protein homeostasis by removing misfolded or damaged proteins that could impair cellular functions, and by removing proteins whose functions are no longer required. Associated with the PA200 or PA28, the 20S proteasome mediates ubiquitin-independent protein degradation. This type of proteolysis is required in several pathways including spermatogenesis (20S-PA200 complex) or generation of a subset of MHC class I-presented antigenic peptides (20S-PA28 complex). Inhibits the transactivation function of HIF-1A under both normoxic and hypoxia-mimicking conditions. The interaction with EMAP2 increases the proteasome-mediated HIF-1A degradation under the hypoxic conditions. Plays a role in hepatitis C virus internal ribosome entry site-mediated translation. Mediates nuclear translocation of the androgen receptor (AR) and thereby enhances androgen-mediated transactivation. Promotes MAVS degradation and thereby negatively regulates MAVS-mediated innate immune response. In Pongo abelii (Sumatran orangutan), this protein is Proteasome subunit alpha type-7 (PSMA7).